Reading from the N-terminus, the 717-residue chain is HHIP-like protein 2 (717 aa).

The N-terminal stretch at 1–40 (MLGKHTSPHTVPGHRAPWLSPGIFCLGLPFLLGWVGLLQG) is a signal peptide. 4 disulfide bridges follow: C203-C545, C207-C551, C423-C441, and C508-C607. A disordered region spans residues 642 to 717 (ARKASNATFT…MRQAAGRSHP (76 aa)). The segment covering 646–662 (SNATFTSSSDRVASQKG) has biased composition (polar residues). An N-linked (GlcNAc...) asparagine glycan is attached at N647. The span at 672-687 (SSKKTFRRPGTKKKSR) shows a compositional bias: basic residues.

Belongs to the HHIP family.

It is found in the secreted. The sequence is that of HHIP-like protein 2 (Hhipl2) from Mus musculus (Mouse).